The sequence spans 270 residues: Energy-coupling factor transporter transmembrane protein EcfT (270 aa).

A run of 4 helical transmembrane segments spans residues 36–56, 72–92, 108–128, and 248–268; these read LFIV…LISI, PIFI…GGAN, LIMA…TSLL, and FIAS…RIWW.

This sequence belongs to the energy-coupling factor EcfT family. As to quaternary structure, forms a stable energy-coupling factor (ECF) transporter complex composed of 2 membrane-embedded substrate-binding proteins (S component), 2 ATP-binding proteins (A component) and 2 transmembrane proteins (T component). May be able to interact with more than 1 S component at a time.

The protein localises to the cell membrane. Transmembrane (T) component of an energy-coupling factor (ECF) ABC-transporter complex. Unlike classic ABC transporters this ECF transporter provides the energy necessary to transport a number of different substrates. This chain is Energy-coupling factor transporter transmembrane protein EcfT, found in Clostridium kluyveri (strain ATCC 8527 / DSM 555 / NBRC 12016 / NCIMB 10680 / K1).